Reading from the N-terminus, the 436-residue chain is F-box/LRR-repeat protein 20 (436 aa).

The region spanning 22 to 68 (AVINKKLPKELLLRIFSFLDVVTLCRCAQVSRAWNVLALDGSNWQRI) is the F-box domain. LRR repeat units lie at residues 74 to 100 (QRDI…SLRG), 101 to 126 (CLGV…SLNG), 127 to 152 (CTKT…DLAS), 153 to 178 (CTSI…NISW), 179 to 204 (CDQV…FLKG), 205 to 230 (CTQL…NLQT), 231 to 256 (CLQI…CASG), 257 to 282 (CSNI…EVAR), 283 to 308 (CSQL…DLEE), 309 to 334 (CVQI…SLSH), 335 to 363 (CELI…ELDN), 364 to 388 (CPLI…ELYD), and 389 to 414 (CQQI…AYFA). Threonine 417 carries the phosphothreonine modification. Serine 421 is modified (phosphoserine).

Interacts with SKP1 and CUL1. As to expression, highly expressed in brain.

It is found in the cytoplasm. Its function is as follows. Substrate-recognition component of the SCF (SKP1-CUL1-F-box protein)-type E3 ubiquitin ligase complex. Isoform 3 regulates neural transmission by binding and ubiquitinating RIMS1, a modulator of presynaptic plasticity. The chain is F-box/LRR-repeat protein 20 (Fbxl20) from Mus musculus (Mouse).